We begin with the raw amino-acid sequence, 302 residues long: Glycine--tRNA ligase alpha subunit (302 aa).

This sequence belongs to the class-II aminoacyl-tRNA synthetase family. In terms of assembly, tetramer of two alpha and two beta subunits.

Its subcellular location is the cytoplasm. It carries out the reaction tRNA(Gly) + glycine + ATP = glycyl-tRNA(Gly) + AMP + diphosphate. The protein is Glycine--tRNA ligase alpha subunit of Haemophilus ducreyi (strain 35000HP / ATCC 700724).